The sequence spans 470 residues: Siroheme synthase (470 aa).

Positions 1 to 201 (MDYFPIFCQL…NDHVQADQHV (201 aa)) are precorrin-2 dehydrogenase /sirohydrochlorin ferrochelatase. NAD(+) is bound by residues 22–23 (EI) and 43–44 (CE). Ser-128 carries the post-translational modification Phosphoserine. The segment at 213–470 (GEVVLVGAGP…KVTECVAHVG (258 aa)) is uroporphyrinogen-III C-methyltransferase. Pro-222 serves as a coordination point for S-adenosyl-L-methionine. Asp-245 acts as the Proton acceptor in catalysis. Lys-267 acts as the Proton donor in catalysis. S-adenosyl-L-methionine-binding positions include 298–300 (GGD), Ile-303, 328–329 (TA), Met-379, and Gly-408.

It in the N-terminal section; belongs to the precorrin-2 dehydrogenase / sirohydrochlorin ferrochelatase family. In the C-terminal section; belongs to the precorrin methyltransferase family.

The catalysed reaction is uroporphyrinogen III + 2 S-adenosyl-L-methionine = precorrin-2 + 2 S-adenosyl-L-homocysteine + H(+). The enzyme catalyses precorrin-2 + NAD(+) = sirohydrochlorin + NADH + 2 H(+). It carries out the reaction siroheme + 2 H(+) = sirohydrochlorin + Fe(2+). The protein operates within cofactor biosynthesis; adenosylcobalamin biosynthesis; precorrin-2 from uroporphyrinogen III: step 1/1. Its pathway is cofactor biosynthesis; adenosylcobalamin biosynthesis; sirohydrochlorin from precorrin-2: step 1/1. It functions in the pathway porphyrin-containing compound metabolism; siroheme biosynthesis; precorrin-2 from uroporphyrinogen III: step 1/1. It participates in porphyrin-containing compound metabolism; siroheme biosynthesis; siroheme from sirohydrochlorin: step 1/1. The protein operates within porphyrin-containing compound metabolism; siroheme biosynthesis; sirohydrochlorin from precorrin-2: step 1/1. Multifunctional enzyme that catalyzes the SAM-dependent methylations of uroporphyrinogen III at position C-2 and C-7 to form precorrin-2 via precorrin-1. Then it catalyzes the NAD-dependent ring dehydrogenation of precorrin-2 to yield sirohydrochlorin. Finally, it catalyzes the ferrochelation of sirohydrochlorin to yield siroheme. The protein is Siroheme synthase of Yersinia pestis.